The primary structure comprises 525 residues: MSL complex subunit 3 (525 aa).

The 60-residue stretch at 13–72 (SGEKVLCFEPDPTKARVLYDAKIIDVIIGKDEKGRKIPEYLIHFNGWNRSWDRWAAEEHV) folds into the Tudor-knot domain. Disordered regions lie at residues 119 to 148 (KEKSKNDENSVSSTCHESCGEKNGGIKEHR) and 302 to 383 (TTTT…DTSA). Residues 136 to 146 (SCGEKNGGIKE) show a composition bias toward basic and acidic residues. The MRG domain maps to 172–521 (DERTITIDIP…CEAHYSTKNP (350 aa)). Residues 294–444 (FFLPIKESTT…WKLVPDNYPP (151 aa)) form a required for the histone acetyltransferase activity of the MSL complex region. Phosphoserine is present on residues S313 and S315. The span at 320-332 (NPSTPQSTESQPP) shows a compositional bias: low complexity. Phosphoserine is present on residues S371 and S404. T409 carries the post-translational modification Phosphothreonine. A phosphoserine mark is found at S411 and S415.

In terms of assembly, component of the MSL histone acetyltransferase complex at least composed of the KAT8/MOF, MSL1/hampin, MSL2 and MSL3. Interacts (via the MRG domain) with MSL1 and KAT8/MOF. In testis, expression is mostly restricted to the spermatocyte stage and only in a small portion of spermatogonia.

It localises to the nucleus. Functionally, non-catalytic component of the MSL histone acetyltransferase complex, a multiprotein complex that mediates the majority of histone H4 acetylation at 'Lys-16' (H4K16ac), an epigenetic mark that prevents chromatin compaction. The MSL complex is required for chromosome stability and genome integrity by maintaining homeostatic levels of H4K16ac. The MSL complex is also involved in gene dosage by promoting up-regulation of genes expressed by the X chromosome. X up-regulation is required to compensate for autosomal biallelic expression. The MSL complex also participates in gene dosage compensation by promoting expression of Tsix non-coding RNA. Acts as a histone reader that specifically recognizes and binds histone H4 monomethylated at 'Lys-20' (H4K20Me1) in a DNA-dependent manner and is proposed to be involved in chromosomal targeting of the MSL complex. May play a role X inactivation in females. The chain is MSL complex subunit 3 from Mus musculus (Mouse).